We begin with the raw amino-acid sequence, 194 residues long: Large ribosomal subunit protein bL25B (194 aa).

The protein belongs to the bacterial ribosomal protein bL25 family. CTC subfamily. Part of the 50S ribosomal subunit; part of the 5S rRNA/L5/L18/L25 subcomplex. Contacts the 5S rRNA. Binds to the 5S rRNA independently of L5 and L18.

In terms of biological role, this is one of the proteins that binds to the 5S RNA in the ribosome where it forms part of the central protuberance. This Symbiobacterium thermophilum (strain DSM 24528 / JCM 14929 / IAM 14863 / T) protein is Large ribosomal subunit protein bL25B.